The primary structure comprises 474 residues: Receptor-transporting protein 3 (474 aa).

The Cytoplasmic portion of the chain corresponds to 1–453; that stretch reads MMEEDIGDTE…SCCEAACNCM (453 aa). The segment at 53-164 adopts a 3CxxC-type zinc-finger fold; the sequence is TFARFHCPSC…SSNCEACLLG (112 aa). The tract at residues 175-304 is disordered; sequence SKPPAPPLSP…ISCTSKPSTT (130 aa). Composition is skewed to polar residues over residues 197–228 and 259–304; these read VTCSNISSSRPSSKVQMPQASKVNPQASNPTK and VTCS…PSTT. Residues 454 to 474 form a helical membrane-spanning segment; that stretch reads SQSPLCCLAFLILFLLLWYLL.

The protein belongs to the TMEM7 family. As to quaternary structure, interacts with TAS2R16. In terms of tissue distribution, expressed predominantly in the liver. Not detected in the olfactory epithelium.

Its subcellular location is the membrane. Promotes functional cell surface expression of the bitter taste receptors TAS2R16 and TAS2R43. This is Receptor-transporting protein 3 (Rtp3) from Mus musculus (Mouse).